The following is a 231-amino-acid chain: MGQQFSDQTQLVLNKLPEKVAKHVTLVRESGSLTYEEFLGRVAELNDMGTAKVASGQEKHLLFEVQPGSDSSAFWKVVVRVVCTKINKSTGIVEASRIMNLYQFIQLYKDITSQASGVLAQSSTSEDPDENSSSVTSCQASLWMGRVKQLTDEEECCICMDGRADLILPCAHSFCQKCIDKWSDRHRNCPICRLQMTGANESWVVSDAPTEDDMANYILNMADEAGQPHRP.

Residue G2 is the site of N-myristoyl glycine attachment. An RING-type zinc finger spans residues 156–193 (CCICMDGRADLILPCAHSFCQKCIDKWSDRHRNCPICR).

It is found in the membrane. In terms of biological role, may be involved in spermatogenesis. The sequence is that of RING finger protein 141 (RNF141) from Canis lupus familiaris (Dog).